Reading from the N-terminus, the 202-residue chain is Cytochrome c oxidase assembly protein CtaG (202 aa).

Residues Met1–Asn14 lie on the Cytoplasmic side of the membrane. Residues Asn15 to Val37 traverse the membrane as a helical; Signal-anchor for type II membrane protein segment. Residues Pro38–Leu202 are Periplasmic-facing.

This sequence belongs to the COX11/CtaG family.

Its subcellular location is the cell inner membrane. Exerts its effect at some terminal stage of cytochrome c oxidase synthesis, probably by being involved in the insertion of the copper B into subunit I. The sequence is that of Cytochrome c oxidase assembly protein CtaG from Rhizobium etli (strain ATCC 51251 / DSM 11541 / JCM 21823 / NBRC 15573 / CFN 42).